Here is a 150-residue protein sequence, read N- to C-terminus: Large ribosomal subunit protein uL15 (150 aa).

The interval 1-57 (MTLRLESLKPNKGARRRKLRKGRGIAAGQGASCGFGMRGQKSRSGRPTRPGFEGGQM) is disordered. The span at 12 to 23 (KGARRRKLRKGR) shows a compositional bias: basic residues. Positions 25–37 (IAAGQGASCGFGM) are enriched in gly residues.

This sequence belongs to the universal ribosomal protein uL15 family. In terms of assembly, part of the 50S ribosomal subunit.

Binds to the 23S rRNA. The chain is Large ribosomal subunit protein uL15 from Synechococcus sp. (strain CC9311).